Here is a 219-residue protein sequence, read N- to C-terminus: MDFLFGSRSSKTFKPKKNIPEGTHQYDLMKHAAATLGSGNLRNAVALPDGEDLNEWVAVNTVDFFNQINMLYGTITEFCTEETCGIMSAGPKYEYHWADGLTVKKPIKCSAPKYIDYLMTWVQDQLDDETLFPSKIGVPFPKNFHSSAKTILKRLFRVYAHIYHQHFTEVVTLGEEAHLNTSFKHFIFFVQEFNLIERRELAPLQELIDKLTAKDERQI.

Cys-79, Cys-84, His-161, and His-166 together coordinate Zn(2+).

This sequence belongs to the MOB1/phocein family. Interacts with and activates trc and wts. Phosphorylated by wts/mats kinase complex. Activated by phosphorylation by Hippo (Hpo) kinase which increases its affinity and its ability to activate Warts (Wts) kinase. In terms of tissue distribution, ubiquitously expressed at low levels in developing tissues (at protein level).

The protein localises to the cytoplasm. It localises to the cytoskeleton. It is found in the microtubule organizing center. The protein resides in the centrosome. Its subcellular location is the nucleus. The protein localises to the cytosol. It localises to the cell membrane. Functionally, coactivator of Warts (Wts) kinase in the Hippo/SWH (Sav/Wts/Hpo)signaling pathway, a signaling pathway that plays a pivotal role in organ size control and tumor suppression by restricting proliferation and promoting apoptosis. The core of this pathway is composed of a kinase cascade wherein Hippo (Hpo), in complex with its regulatory protein Salvador (Sav), phosphorylates and activates Warts (Wts) in complex with its regulatory protein Mats, which in turn phosphorylates and inactivates the Yorkie (Yki)oncoprotein. The Hippo/SWH signaling pathway inhibits the activity of the transcriptional complex formed by Scalloped (sd) and Yki and the target genes of this pathway include cyclin-E (cycE), diap1 and bantam. Mats is essential for early development and is required for proper chromosomal segregation in developing embryos. This is MOB kinase activator-like 1 from Drosophila melanogaster (Fruit fly).